Reading from the N-terminus, the 338-residue chain is Phenylalanine--tRNA ligase alpha subunit (338 aa).

Glutamate 253 contributes to the Mg(2+) binding site.

This sequence belongs to the class-II aminoacyl-tRNA synthetase family. Phe-tRNA synthetase alpha subunit type 1 subfamily. Tetramer of two alpha and two beta subunits. Mg(2+) serves as cofactor.

It is found in the cytoplasm. The enzyme catalyses tRNA(Phe) + L-phenylalanine + ATP = L-phenylalanyl-tRNA(Phe) + AMP + diphosphate + H(+). The protein is Phenylalanine--tRNA ligase alpha subunit of Legionella pneumophila (strain Paris).